We begin with the raw amino-acid sequence, 492 residues long: Cobyric acid synthase (492 aa).

Residues 259–453 (HTTVAVVAYP…LHGLFEDAVA (195 aa)) enclose the GATase cobBQ-type domain. Cysteine 340 (nucleophile) is an active-site residue. Histidine 445 is a catalytic residue.

The protein belongs to the CobB/CobQ family. CobQ subfamily.

It participates in cofactor biosynthesis; adenosylcobalamin biosynthesis. In terms of biological role, catalyzes amidations at positions B, D, E, and G on adenosylcobyrinic A,C-diamide. NH(2) groups are provided by glutamine, and one molecule of ATP is hydrogenolyzed for each amidation. This chain is Cobyric acid synthase, found in Paracidovorax citrulli (strain AAC00-1) (Acidovorax citrulli).